A 275-amino-acid polypeptide reads, in one-letter code: MVNYSSISCIFFVALFSIFTIVSISSAASSHGEVEDEREFNYKKNDEKGPERWGELKPEWEMCGKGEMQSPIDLMNERVNIVSHLGRLNRDYNPSNATLKNRGHDIMLKFEDGAGTIKINGFEYELQQLHWHSPSEHTINGRRFALELHMVHEGRNRRMAVVTVLYKIGRADTFIRSLEKELEGIAEMEEAEKNVGMIDPTKIKIGSRKYYRYTGSLTTPPCTQNVTWSVVRKVRTVTRKQVKLLRVAVHDDANSNARPVQPTNKRIVHLYRPIV.

A signal peptide spans 1 to 27 (MVNYSSISCIFFVALFSIFTIVSISSA). Asparagine 3 and asparagine 96 each carry an N-linked (GlcNAc...) asparagine glycan. In terms of domain architecture, Alpha-carbonic anhydrase spans 38 to 272 (REFNYKKNDE…TNKRIVHLYR (235 aa)). A disulfide bond links cysteine 63 and cysteine 222. Histidine 104 functions as the Proton acceptor in the catalytic mechanism. Positions 130, 132, and 149 each coordinate Zn(2+). 218–219 (TT) is a binding site for substrate. N-linked (GlcNAc...) asparagine glycosylation is present at asparagine 225.

The protein belongs to the alpha-class carbonic anhydrase family. Zn(2+) is required as a cofactor. N-glycosylated.

Its subcellular location is the plastid. It is found in the chloroplast stroma. It catalyses the reaction hydrogencarbonate + H(+) = CO2 + H2O. Its function is as follows. Reversible hydration of carbon dioxide. The polypeptide is Alpha carbonic anhydrase 7 (ACA7) (Arabidopsis thaliana (Mouse-ear cress)).